The following is a 527-amino-acid chain: Probable bifunctional tRNA threonylcarbamoyladenosine biosynthesis protein (527 aa).

Residues 1–324 form a kae1 region; the sequence is MIVLGLEGTA…YRIDEVDAPW (324 aa). Positions 107, 111, and 128 each coordinate Fe cation. Residues 128–132, aspartate 160, glycine 173, glutamate 177, and asparagine 257 each bind L-threonylcarbamoyladenylate; that span reads YVSGG. Aspartate 285 serves as a coordination point for Fe cation. Residues 330-527 form the Protein kinase domain; that stretch reads VKYRDAGAES…EDIRRRHRYV (198 aa). Residues 333–341 and lysine 354 contribute to the ATP site; that span reads RDAGAESRI. Catalysis depends on aspartate 445, which acts as the Proton acceptor; for kinase activity.

The protein in the N-terminal section; belongs to the KAE1 / TsaD family. In the C-terminal section; belongs to the protein kinase superfamily. Tyr protein kinase family. BUD32 subfamily. As to quaternary structure, component of the KEOPS complex that consists of Kae1, Bud32, Cgi121 and Pcc1; the whole complex dimerizes. Fe(2+) serves as cofactor.

It is found in the cytoplasm. It carries out the reaction L-seryl-[protein] + ATP = O-phospho-L-seryl-[protein] + ADP + H(+). The catalysed reaction is L-threonyl-[protein] + ATP = O-phospho-L-threonyl-[protein] + ADP + H(+). The enzyme catalyses L-threonylcarbamoyladenylate + adenosine(37) in tRNA = N(6)-L-threonylcarbamoyladenosine(37) in tRNA + AMP + H(+). In terms of biological role, required for the formation of a threonylcarbamoyl group on adenosine at position 37 (t(6)A37) in tRNAs that read codons beginning with adenine. Is a component of the KEOPS complex that is probably involved in the transfer of the threonylcarbamoyl moiety of threonylcarbamoyl-AMP (TC-AMP) to the N6 group of A37. The Kae1 domain likely plays a direct catalytic role in this reaction. The Bud32 domain probably displays kinase activity that regulates Kae1 function. This chain is Probable bifunctional tRNA threonylcarbamoyladenosine biosynthesis protein, found in Thermoplasma volcanium (strain ATCC 51530 / DSM 4299 / JCM 9571 / NBRC 15438 / GSS1).